The primary structure comprises 131 residues: D-ribose pyranase (131 aa).

The active-site Proton donor is His20. Residues Asp28, His98, and 120–122 (YAN) contribute to the substrate site.

The protein belongs to the RbsD / FucU family. RbsD subfamily. As to quaternary structure, homodecamer.

The protein resides in the cytoplasm. It catalyses the reaction beta-D-ribopyranose = beta-D-ribofuranose. The protein operates within carbohydrate metabolism; D-ribose degradation; D-ribose 5-phosphate from beta-D-ribopyranose: step 1/2. Functionally, catalyzes the interconversion of beta-pyran and beta-furan forms of D-ribose. The polypeptide is D-ribose pyranase (Symbiobacterium thermophilum (strain DSM 24528 / JCM 14929 / IAM 14863 / T)).